The chain runs to 336 residues: uncharacterized protein (336 aa).

2 residues coordinate NADP(+): lysine 39 and tyrosine 166.

It belongs to the NAD(P)-dependent epimerase/dehydratase family. Dihydroflavonol-4-reductase subfamily.

The protein resides in the cytoplasm. The protein localises to the nucleus. This is an uncharacterized protein from Schizosaccharomyces pombe (strain 972 / ATCC 24843) (Fission yeast).